A 430-amino-acid chain; its full sequence is Ribosomal protein uS12 methylthiotransferase RimO (430 aa).

Residues 1-116 (MRVGIKVLGC…IANAIENGTD (116 aa)) enclose the MTTase N-terminal domain. [4Fe-4S] cluster is bound by residues cysteine 10, cysteine 46, cysteine 79, cysteine 148, cysteine 152, and cysteine 155. Residues 134 to 365 (LEERPYAYVK…LLQAEISNSR (232 aa)) enclose the Radical SAM core domain. The 64-residue stretch at 367–430 (DRFVGKKLKF…DEYDMWGSVI (64 aa)) folds into the TRAM domain.

Belongs to the methylthiotransferase family. RimO subfamily. In terms of assembly, monomer. It depends on [4Fe-4S] cluster as a cofactor.

Its subcellular location is the cytoplasm. The enzyme catalyses L-aspartate(89)-[ribosomal protein uS12]-hydrogen + (sulfur carrier)-SH + AH2 + 2 S-adenosyl-L-methionine = 3-methylsulfanyl-L-aspartate(89)-[ribosomal protein uS12]-hydrogen + (sulfur carrier)-H + 5'-deoxyadenosine + L-methionine + A + S-adenosyl-L-homocysteine + 2 H(+). Catalyzes the methylthiolation of an aspartic acid residue of ribosomal protein uS12. In Thermotoga maritima (strain ATCC 43589 / DSM 3109 / JCM 10099 / NBRC 100826 / MSB8), this protein is Ribosomal protein uS12 methylthiotransferase RimO.